The primary structure comprises 451 residues: Spermidine sinapoyl-CoA acyltransferase (451 aa).

Residues Tyr-47, His-169, Ser-294, Asp-316, and Leu-378 each coordinate spermidine. Residue His-169 is the Proton acceptor of the active site. Asp-391 acts as the Proton acceptor in catalysis.

This sequence belongs to the plant acyltransferase family. Monomer. As to expression, predominantly expressed in siliques, especially in seeds around the embryo, and, at low levels, in flowers. Barely detectable in stems, leaves, and roots.

The enzyme catalyses 2 (E)-sinapoyl-CoA + spermidine = N(1),N(8)-bis[(E)-sinapoyl]-spermidine + 2 CoA + 2 H(+). Its pathway is amine and polyamine metabolism; spermidine metabolism. Its function is as follows. Spermidine sinapoyl-CoA acyltransferase that mediates the accumulation of disinapoyl spermidine conjugates in seeds. Catalyzes the two conjugating steps required for the biosynthesis of N1,N8-disipanoyl-spermidine. Can also use putrescine as an acyl acceptor to convert it into monosinapoyl-putrescine. The chain is Spermidine sinapoyl-CoA acyltransferase from Arabidopsis thaliana (Mouse-ear cress).